A 349-amino-acid polypeptide reads, in one-letter code: Homeobox-leucine zipper protein HOX5 (349 aa).

The segment at residues 83–142 (APEKKRRLTAEQVQMLERSFEEENKLEPERKTELARRLGMAPRQVAVWFQNRRARWKTKQ) is a DNA-binding region (homeobox). The tract at residues 141 to 185 (KQLEHDFDRLKAAYDALAADHHALLSDNDRLRAQVISLTEKLQDK) is leucine-zipper. Residues 181–253 (KLQDKETSPS…GTNDDGDGGA (73 aa)) form a disordered region. The segment covering 188-198 (SPSSATITTAA) has biased composition (low complexity).

It belongs to the HD-ZIP homeobox family. Class I subfamily. Homodimer. May form a heterodimer with HOX4. Expressed in seedlings, roots, leaves, nodes, internodes, flowers and embryo.

Its subcellular location is the nucleus. Functionally, probable transcription activator that binds to the DNA sequence 5'-CAAT[AT]ATTG-3'. In Oryza sativa subsp. japonica (Rice), this protein is Homeobox-leucine zipper protein HOX5 (HOX5).